We begin with the raw amino-acid sequence, 330 residues long: DNA-directed RNA polymerase subunit alpha (330 aa).

The tract at residues 1-225 is alpha N-terminal domain (alpha-NTD); it reads MSDLAIPTIS…KQFAALVSHN (225 aa). An alpha C-terminal domain (alpha-CTD) region spans residues 237 to 330; it reads VKYAIPEEKY…KKKNKGMDEA (94 aa).

It belongs to the RNA polymerase alpha chain family. In terms of assembly, homodimer. The RNAP catalytic core consists of 2 alpha, 1 beta, 1 beta' and 1 omega subunit. When a sigma factor is associated with the core the holoenzyme is formed, which can initiate transcription.

It catalyses the reaction RNA(n) + a ribonucleoside 5'-triphosphate = RNA(n+1) + diphosphate. Its function is as follows. DNA-dependent RNA polymerase catalyzes the transcription of DNA into RNA using the four ribonucleoside triphosphates as substrates. The polypeptide is DNA-directed RNA polymerase subunit alpha (Dehalococcoides mccartyi (strain ATCC BAA-2266 / KCTC 15142 / 195) (Dehalococcoides ethenogenes (strain 195))).